A 431-amino-acid chain; its full sequence is Serine--tRNA ligase (431 aa).

The interval 41–66 is disordered; sequence QSRTQELQAERNARSKSIGEAARRGE. Residue 240-242 coordinates L-serine; it reads TSE. 271–273 provides a ligand contact to ATP; it reads RSE. Glu294 lines the L-serine pocket. 358–361 is a binding site for ATP; that stretch reads EISS. Residue Ser392 participates in L-serine binding.

It belongs to the class-II aminoacyl-tRNA synthetase family. Type-1 seryl-tRNA synthetase subfamily. In terms of assembly, homodimer. The tRNA molecule binds across the dimer.

It is found in the cytoplasm. It catalyses the reaction tRNA(Ser) + L-serine + ATP = L-seryl-tRNA(Ser) + AMP + diphosphate + H(+). The catalysed reaction is tRNA(Sec) + L-serine + ATP = L-seryl-tRNA(Sec) + AMP + diphosphate + H(+). It functions in the pathway aminoacyl-tRNA biosynthesis; selenocysteinyl-tRNA(Sec) biosynthesis; L-seryl-tRNA(Sec) from L-serine and tRNA(Sec): step 1/1. Functionally, catalyzes the attachment of serine to tRNA(Ser). Is also able to aminoacylate tRNA(Sec) with serine, to form the misacylated tRNA L-seryl-tRNA(Sec), which will be further converted into selenocysteinyl-tRNA(Sec). The protein is Serine--tRNA ligase of Aeromonas hydrophila subsp. hydrophila (strain ATCC 7966 / DSM 30187 / BCRC 13018 / CCUG 14551 / JCM 1027 / KCTC 2358 / NCIMB 9240 / NCTC 8049).